A 571-amino-acid chain; its full sequence is OTU domain-containing protein 5 (571 aa).

2 disordered regions span residues 1–111 and 146–175; these read MTIL…GPGG and PGHSKRRRQAPGVGAVGGGSPEREEVGAGY. The span at 11–30 shows a compositional bias: pro residues; the sequence is PPDADPANEPPPPGPMPPAP. Gly residues predominate over residues 32–47; sequence RGGGVGVGGGGTGVGG. Residues 63 to 75 show a composition bias toward pro residues; the sequence is ASPPPQGPLPGPP. Phosphoserine is present on Ser-64. Low complexity predominate over residues 84–97; it reads AVPPGAVAGPRPQQ. Ser-165 carries the post-translational modification Phosphoserine. Tyr-175 is modified (phosphotyrosine). Ser-177 carries the phosphoserine modification. Thr-195 carries the phosphothreonine modification. The 129-residue stretch at 213–341 folds into the OTU domain; the sequence is FIIKQMKEDG…NIHYNSVVNP (129 aa). The interval 218–224 is cys-loop; that stretch reads MKEDGAC. Asp-221 is an active-site residue. Cys-224 (nucleophile) is an active-site residue. Positions 273–283 are variable-loop; the sequence is KRKNNCHGNHI. Ser-328 is modified (phosphoserine; by MTOR). Residues 329 to 334 are his-loop; the sequence is YHRNIH. The active site involves His-334. Ser-337 and Ser-375 each carry phosphoserine. The tract at residues 418–502 is disordered; the sequence is ARQVRGPSQP…PGTSSQFSAG (85 aa). Low complexity-rich tracts occupy residues 430 to 443 and 450 to 462; these read ASATCSSATAAASS and SRSPRQRSSASSP. Ser-452 bears the Phosphoserine mark. At Thr-507 the chain carries Phosphothreonine. Residue Ser-508 is modified to Phosphoserine; by MTOR.

Belongs to the peptidase C85 family. Interacts with TRAF3. Post-translationally, phosphorylation at Ser-177 is required for deubiquitinating activity. Phosphorylation at Ser-328, Ser-337 and Ser-508 by MTOR promotes its activity. As to expression, expressed in various tissues, including the liver and placenta, as well as in peripheral blood leukocytes.

Its subcellular location is the nucleus. The catalysed reaction is Thiol-dependent hydrolysis of ester, thioester, amide, peptide and isopeptide bonds formed by the C-terminal Gly of ubiquitin (a 76-residue protein attached to proteins as an intracellular targeting signal).. With respect to regulation, inhibited by N-ethyl-maleimide (NEM). Functionally, deubiquitinating enzyme that functions as a negative regulator of the innate immune system. Has peptidase activity towards 'Lys-48'- and 'Lys-63'-linked polyubiquitin chains. Can also cleave 'Lys-11'-linked ubiquitin chains (in vitro). Acts via TRAF3 deubiquitination and subsequent suppression of type I interferon (IFN) production. Controls neuroectodermal differentiation through cleaving 'Lys-48'-linked ubiquitin chains to counteract degradation of select chromatin regulators such as ARID1A, HDAC2 and HCF1. Acts as a positive regulator of mTORC1 and mTORC2 signaling following phosphorylation by MTOR: acts by mediating deubiquitination of BTRC, leading to its stability. The sequence is that of OTU domain-containing protein 5 from Homo sapiens (Human).